The primary structure comprises 1066 residues: Isoleucine--tRNA ligase (1066 aa).

Positions 49-59 match the 'HIGH' region motif; it reads PYVSGAIHLGT. The short motif at 625 to 629 is the 'KMSKS' region element; that stretch reads KMSKS. Lys628 serves as a coordination point for ATP.

This sequence belongs to the class-I aminoacyl-tRNA synthetase family. IleS type 2 subfamily. As to quaternary structure, monomer. Zn(2+) serves as cofactor.

It localises to the cytoplasm. The enzyme catalyses tRNA(Ile) + L-isoleucine + ATP = L-isoleucyl-tRNA(Ile) + AMP + diphosphate. Catalyzes the attachment of isoleucine to tRNA(Ile). As IleRS can inadvertently accommodate and process structurally similar amino acids such as valine, to avoid such errors it has two additional distinct tRNA(Ile)-dependent editing activities. One activity is designated as 'pretransfer' editing and involves the hydrolysis of activated Val-AMP. The other activity is designated 'posttransfer' editing and involves deacylation of mischarged Val-tRNA(Ile). The chain is Isoleucine--tRNA ligase from Pyrococcus horikoshii (strain ATCC 700860 / DSM 12428 / JCM 9974 / NBRC 100139 / OT-3).